Consider the following 355-residue polypeptide: uncharacterized protein (355 aa).

The first 22 residues, 1 to 22 (MRLTHVTACICLLVAVAVLFSG), serve as a signal peptide directing secretion.

It belongs to the bacterial solute-binding protein 1 family. WtpA subfamily.

This is an uncharacterized protein from Methanoculleus marisnigri (strain ATCC 35101 / DSM 1498 / JR1).